The following is a 325-amino-acid chain: Formimidoylglutamase (325 aa).

Mn(2+) contacts are provided by histidine 130, aspartate 156, histidine 158, aspartate 160, cysteine 244, and aspartate 246.

The protein belongs to the arginase family. Mn(2+) is required as a cofactor.

It carries out the reaction N-formimidoyl-L-glutamate + H2O = formamide + L-glutamate. It functions in the pathway amino-acid degradation; L-histidine degradation into L-glutamate; L-glutamate from N-formimidoyl-L-glutamate (hydrolase route): step 1/1. Its function is as follows. Catalyzes the conversion of N-formimidoyl-L-glutamate to L-glutamate and formamide. This Geobacillus sp. (strain WCH70) protein is Formimidoylglutamase.